An 825-amino-acid chain; its full sequence is NT-3 growth factor receptor (825 aa).

Residues 1 to 31 form the signal peptide; that stretch reads MDVSLCPAKCSFWRIFLLGSVWLDYVGSVLA. Intrachain disulfides connect cysteine 32/cysteine 38 and cysteine 36/cysteine 45. The Extracellular portion of the chain corresponds to 32–429; the sequence is CPANCVCSKT…TVTHKPEEDT (398 aa). N-linked (GlcNAc...) asparagine glycosylation is found at asparagine 68, asparagine 72, and asparagine 79. LRR repeat units follow at residues 104–125 and 128–149; these read GLQK…AFAK and HLRY…LFQT. Asparagine 133 and asparagine 163 each carry an N-linked (GlcNAc...) asparagine glycan. An LRRCT domain is found at 160-209; it reads NFFNCSCDIRWMQLWQEQGEAKLNNQNLYCINADGSQLPLFRMNISQCDL. 2 disulfide bridges follow: cysteine 164–cysteine 189 and cysteine 166–cysteine 207. Asparagine 203, asparagine 218, asparagine 232, asparagine 259, asparagine 267, asparagine 272, and asparagine 294 each carry an N-linked (GlcNAc...) asparagine glycan. Ig-like C2-type domains are found at residues 210 to 300 and 309 to 382; these read PEIS…VALT and SLEE…IAKN. Cysteine 231 and cysteine 284 are joined by a disulfide. A disulfide bridge connects residues cysteine 320 and cysteine 362. 2 N-linked (GlcNAc...) asparagine glycosylation sites follow: asparagine 375 and asparagine 388. A helical membrane pass occupies residues 430–453; that stretch reads FGVSIAVGLAAFACVLLVVLFIMI. The Cytoplasmic portion of the chain corresponds to 454 to 825; that stretch reads NKYGRRSKFG…ATPIYLDILG (372 aa). Serine 493 is subject to Phosphoserine. Tyrosine 516 is modified (phosphotyrosine; by autocatalysis). One can recognise a Protein kinase domain in the interval 538 to 825; the sequence is IVLKRELGEG…ATPIYLDILG (288 aa). Residues 544 to 552 and lysine 572 each bind ATP; that span reads LGEGAFGKV. Residue aspartate 679 is the Proton acceptor of the active site. 3 positions are modified to phosphotyrosine; by autocatalysis: tyrosine 705, tyrosine 709, and tyrosine 710.

This sequence belongs to the protein kinase superfamily. Tyr protein kinase family. Insulin receptor subfamily. Exists in a dynamic equilibrium between monomeric (low affinity) and dimeric (high affinity) structures. Binds SH2B2. Interacts with SQSTM1 and KIDINS220. Interacts with PTPRS. Interacts with MAPK8IP3/JIP3. In terms of processing, ligand-mediated auto-phosphorylation.

The protein localises to the membrane. The catalysed reaction is L-tyrosyl-[protein] + ATP = O-phospho-L-tyrosyl-[protein] + ADP + H(+). Functionally, receptor tyrosine kinase involved in nervous system and probably heart development. Upon binding of its ligand NTF3/neurotrophin-3, NTRK3 autophosphorylates and activates different signaling pathways, including the phosphatidylinositol 3-kinase/AKT and the MAPK pathways, that control cell survival and differentiation. The polypeptide is NT-3 growth factor receptor (NTRK3) (Macaca fascicularis (Crab-eating macaque)).